Here is a 475-residue protein sequence, read N- to C-terminus: MPVTNSPRTLFDKIWDDHVVERLEDGTCILYIDRHLVHEVTSPQAFEGLRMSGRRVRRPDATVAVADHNVPTSDRSKPIEEPQSRLQIETLEKNVAEFGVPYFPLRSASQGIVHVVGPEQGISLPGMTIVCGDSHTSTHGALGSLAFGIGTSEVEHVLATQTILQKPAKNMRVSVEGKVGPGVTAKDILLAIIGRIGTAGGTGHVIEFAGSAIRDLDMAGRMTLCNMSIEAGARAGLVAPDETTFAYVKGRPFAPKGEAFEQACDYWRSLASDDGAYFDTEVTLAAEEIIPSVTWGTSPQNVLPIDGSVPSPSDEPDPARAAQIQRALDYMGLEAGQKIAGTPVDVVFIGSCTNSRLEDLRAAADVVRGRHVAEGVRAMIVPGSGLVKHAAEAEGLDKVFLDAGFEWREAGCSMCLGMNPDRLTPGQRCASTSNRNFEGRQGPDGRTHLCSPAMAAAAAVTGRLCDVRELVKETV.

[4Fe-4S] cluster-binding residues include C352, C412, and C415.

It belongs to the aconitase/IPM isomerase family. LeuC type 1 subfamily. In terms of assembly, heterodimer of LeuC and LeuD. Requires [4Fe-4S] cluster as cofactor.

It carries out the reaction (2R,3S)-3-isopropylmalate = (2S)-2-isopropylmalate. Its pathway is amino-acid biosynthesis; L-leucine biosynthesis; L-leucine from 3-methyl-2-oxobutanoate: step 2/4. Catalyzes the isomerization between 2-isopropylmalate and 3-isopropylmalate, via the formation of 2-isopropylmaleate. In Gluconobacter oxydans (strain 621H) (Gluconobacter suboxydans), this protein is 3-isopropylmalate dehydratase large subunit.